Reading from the N-terminus, the 138-residue chain is Small ribosomal subunit protein uS11c (138 aa).

Belongs to the universal ribosomal protein uS11 family. As to quaternary structure, part of the 30S ribosomal subunit.

It localises to the plastid. Its subcellular location is the chloroplast. The chain is Small ribosomal subunit protein uS11c from Phalaenopsis aphrodite subsp. formosana (Moth orchid).